We begin with the raw amino-acid sequence, 480 residues long: Glutarate-semialdehyde dehydrogenase (480 aa).

NADP(+) contacts are provided by residues 156–157, 180–183, and 233–234; these read WN, KPAS, and GS. The active-site Proton acceptor is the Glu-255. Leu-256 contacts NADP(+). The active-site Nucleophile is the Cys-289. An NADP(+)-binding site is contributed by Glu-384.

Belongs to the aldehyde dehydrogenase family.

The catalysed reaction is 5-oxopentanoate + NADP(+) + H2O = glutarate + NADPH + 2 H(+). Its pathway is amino-acid degradation. Functionally, catalyzes the conversion of 5-oxopentanoate (glutarate semialdehyde) to glutarate. Involved in L-lysine degradation. This is Glutarate-semialdehyde dehydrogenase from Pseudomonas putida (strain ATCC 47054 / DSM 6125 / CFBP 8728 / NCIMB 11950 / KT2440).